The primary structure comprises 426 residues: Serine--tRNA ligase (426 aa).

The segment covering 41–60 has biased composition (polar residues); it reads QTRTEQLQAERNARSKSIGQ. The interval 41–64 is disordered; sequence QTRTEQLQAERNARSKSIGQAKQR. 233-235 contributes to the L-serine binding site; sequence TAE. 264 to 266 is an ATP binding site; sequence RSE. Residue E287 coordinates L-serine. 351 to 354 serves as a coordination point for ATP; that stretch reads EISS. Residue S387 participates in L-serine binding.

Belongs to the class-II aminoacyl-tRNA synthetase family. Type-1 seryl-tRNA synthetase subfamily. As to quaternary structure, homodimer. The tRNA molecule binds across the dimer.

The protein localises to the cytoplasm. The catalysed reaction is tRNA(Ser) + L-serine + ATP = L-seryl-tRNA(Ser) + AMP + diphosphate + H(+). The enzyme catalyses tRNA(Sec) + L-serine + ATP = L-seryl-tRNA(Sec) + AMP + diphosphate + H(+). It participates in aminoacyl-tRNA biosynthesis; selenocysteinyl-tRNA(Sec) biosynthesis; L-seryl-tRNA(Sec) from L-serine and tRNA(Sec): step 1/1. Functionally, catalyzes the attachment of serine to tRNA(Ser). Is also able to aminoacylate tRNA(Sec) with serine, to form the misacylated tRNA L-seryl-tRNA(Sec), which will be further converted into selenocysteinyl-tRNA(Sec). The polypeptide is Serine--tRNA ligase (Pseudomonas fluorescens (strain ATCC BAA-477 / NRRL B-23932 / Pf-5)).